Here is a 539-residue protein sequence, read N- to C-terminus: Monocarboxylate transporter 8 (539 aa).

The segment at 1-92 (MALQSQASEE…VETRGTARGF (92 aa)) is disordered. Alanine 2 is subject to N-acetylalanine. Residues 2 to 96 (ALQSQASEEA…GTARGFQPPE (95 aa)) are Cytoplasmic-facing. Residues 31–41 (PESEPEPEPEP) show a composition bias toward acidic residues. A compositionally biased stretch (pro residues) spans 42-64 (EPVPVPPPEPQPEPQPLPDPAPL). Residues 97–117 (GGFGWVVVFAATWCNGSIFGI) form a helical membrane-spanning segment. Topologically, residues 118-143 (HNSVGILYSMLLEEEKEKNRQVEFQA) are extracellular. A helical membrane pass occupies residues 144-164 (AWVGALAMGMIFFCSPIVSIF). At 165–171 (TDRLGCR) the chain is on the cytoplasmic side. The helical transmembrane segment at 172-192 (ITATAGAAVAFIGLHTSSFTS) threads the bilayer. Residues 193–200 (SLSLRYFT) lie on the Extracellular side of the membrane. Residues 201 to 221 (YGILFGCGCSFAFQPSLVILG) traverse the membrane as a helical segment. Over 222-229 (HYFQRRLG) the chain is Cytoplasmic. A helical transmembrane segment spans residues 230-250 (LANGVVSAGSSIFSMSFPFLI). Over 251–258 (RMLGDKIK) the chain is Extracellular. The helical transmembrane segment at 259 to 279 (LAQTFQVLSTFMFVLMLLSLT) threads the bilayer. Over 280–322 (YRPLLPSSQDTPSKRGVRTLHQRFLAQLRKYFNMRVFRQRTYR) the chain is Cytoplasmic. Residues 323 to 343 (IWAFGIAAAALGYFVPYVHLM) form a helical membrane-spanning segment. The Extracellular portion of the chain corresponds to 344 to 356 (KYVEEEFSEIKET). The chain crosses the membrane as a helical span at residues 357–377 (WVLLVCIGATSGLGRLVSGHI). Residues 378-386 (SDSIPGLKK) are Cytoplasmic-facing. A helical membrane pass occupies residues 387-407 (IYLQVLSFLLLGLMSMMIPLC). The Extracellular segment spans residues 408-409 (RD). The chain crosses the membrane as a helical span at residues 410-430 (FGGLIVVCLFLGLCDGFFITI). At 431–447 (MAPIAFELVGPMQASQA) the chain is on the cytoplasmic side. A helical transmembrane segment spans residues 448–468 (IGYLLGMMALPMIAGPPIAGL). The Extracellular segment spans residues 469–477 (LRNCFGDYH). A helical membrane pass occupies residues 478–498 (VAFYFAGVPPIIGAVILFFVP). Topologically, residues 499 to 539 (LMHQRMFKKEQRDSSKDKMLAPDPDPNGELLPGSPNPEEPI) are cytoplasmic. The span at 508 to 518 (EQRDSSKDKML) shows a compositional bias: basic and acidic residues. Residues 508–539 (EQRDSSKDKMLAPDPDPNGELLPGSPNPEEPI) form a disordered region.

It belongs to the major facilitator superfamily. Monocarboxylate porter (TC 2.A.1.13) family. Monomer. Homodimer. Homooligomer. In terms of tissue distribution, highly expressed in liver and heart. In adult brain tissue expression is largely confined to endothelial cells of the blood-brain barrier (at protein level).

The protein localises to the cell membrane. It localises to the apical cell membrane. The catalysed reaction is 3,3',5-triiodo-L-thyronine(out) = 3,3',5-triiodo-L-thyronine(in). It catalyses the reaction L-thyroxine(out) = L-thyroxine(in). It carries out the reaction 3,3',5'-triiodo-L-thyronine(out) = 3,3',5'-triiodo-L-thyronine(in). The enzyme catalyses 3,3'-diiodo-L-thyronine(out) = 3,3'-diiodo-L-thyronine(in). Its function is as follows. Specific thyroid hormone transmembrane transporter, that mediates both uptake and efflux of thyroid hormones across the cell membrane independently of pH or a Na(+) gradient. Major substrates are the iodothyronines T3 and T4 and to a lesser extent rT3 and 3,3-diiodothyronine (3,3'-T2). Acts as an important mediator of thyroid hormone transport, especially T3, through the blood-brain barrier. The chain is Monocarboxylate transporter 8 (SLC16A2) from Homo sapiens (Human).